A 445-amino-acid chain; its full sequence is tRNA modification GTPase MnmE (445 aa).

The (6S)-5-formyl-5,6,7,8-tetrahydrofolate site is built by Arg-21, Glu-78, and Lys-117. Residues 213 to 370 (GFRIALVGAP…LKETLSERVV (158 aa)) enclose the TrmE-type G domain. Residues 223–228 (NAGKST), 242–248 (TATPGTT), and 267–270 (DTAG) each bind GTP. 2 residues coordinate Mg(2+): Ser-227 and Thr-248. (6S)-5-formyl-5,6,7,8-tetrahydrofolate is bound at residue Lys-445.

The protein belongs to the TRAFAC class TrmE-Era-EngA-EngB-Septin-like GTPase superfamily. TrmE GTPase family. As to quaternary structure, homodimer. Heterotetramer of two MnmE and two MnmG subunits. K(+) serves as cofactor.

The protein resides in the cytoplasm. Its function is as follows. Exhibits a very high intrinsic GTPase hydrolysis rate. Involved in the addition of a carboxymethylaminomethyl (cmnm) group at the wobble position (U34) of certain tRNAs, forming tRNA-cmnm(5)s(2)U34. The protein is tRNA modification GTPase MnmE of Phenylobacterium zucineum (strain HLK1).